The sequence spans 341 residues: Phenylalanine--tRNA ligase alpha subunit (341 aa).

Mg(2+) is bound at residue Glu-256.

Belongs to the class-II aminoacyl-tRNA synthetase family. Phe-tRNA synthetase alpha subunit type 1 subfamily. As to quaternary structure, tetramer of two alpha and two beta subunits. Mg(2+) serves as cofactor.

It localises to the cytoplasm. The enzyme catalyses tRNA(Phe) + L-phenylalanine + ATP = L-phenylalanyl-tRNA(Phe) + AMP + diphosphate + H(+). This chain is Phenylalanine--tRNA ligase alpha subunit, found in Clostridium perfringens (strain 13 / Type A).